A 349-amino-acid polypeptide reads, in one-letter code: uncharacterized protein (349 aa).

10 consecutive transmembrane segments (helical) span residues 15–35 (VHSP…NPVT), 53–73 (ISFC…MILI), 91–111 (WFLL…LMFS), 120–140 (NVVL…ILLL), 147–167 (LSMV…FWGV), 179–199 (FGLG…TTIL), 218–238 (LLGT…DHFM), 248–268 (WMLI…LAGL), 276–296 (INLA…LILL), and 302–322 (AQYL…IDNL). EamA domains lie at 39–164 (IELG…VTVF) and 191–319 (FISA…LSFI).

Belongs to the EamA transporter family.

Its subcellular location is the cell membrane. This is an uncharacterized protein from Synechocystis sp. (strain ATCC 27184 / PCC 6803 / Kazusa).